A 71-amino-acid polypeptide reads, in one-letter code: UPF0352 protein Ssed_1809 (71 aa).

Belongs to the UPF0352 family.

This chain is UPF0352 protein Ssed_1809, found in Shewanella sediminis (strain HAW-EB3).